An 862-amino-acid chain; its full sequence is DNA gyrase subunit A (862 aa).

A Topo IIA-type catalytic domain is found at 38–501 (LPDARDGLKP…DYDDIDVEDL (464 aa)). Tyrosine 126 serves as the catalytic O-(5'-phospho-DNA)-tyrosine intermediate. Positions 528–534 (QKRGGKG) match the GyrA-box motif. A disordered region spans residues 843–862 (KEESDDDDIVADDTQEQDME). Residues 845–862 (ESDDDDIVADDTQEQDME) are compositionally biased toward acidic residues.

This sequence belongs to the type II topoisomerase GyrA/ParC subunit family. In terms of assembly, heterotetramer, composed of two GyrA and two GyrB chains. In the heterotetramer, GyrA contains the active site tyrosine that forms a transient covalent intermediate with DNA, while GyrB binds cofactors and catalyzes ATP hydrolysis.

Its subcellular location is the cytoplasm. The enzyme catalyses ATP-dependent breakage, passage and rejoining of double-stranded DNA.. A type II topoisomerase that negatively supercoils closed circular double-stranded (ds) DNA in an ATP-dependent manner to modulate DNA topology and maintain chromosomes in an underwound state. Negative supercoiling favors strand separation, and DNA replication, transcription, recombination and repair, all of which involve strand separation. Also able to catalyze the interconversion of other topological isomers of dsDNA rings, including catenanes and knotted rings. Type II topoisomerases break and join 2 DNA strands simultaneously in an ATP-dependent manner. The polypeptide is DNA gyrase subunit A (Campylobacter fetus).